The sequence spans 375 residues: Patatin-1-Kuras 2 (375 aa).

An N-terminal signal peptide occupies residues 1 to 11 (MILATTSSTFA). In terms of domain architecture, PNPLA spans 20–218 (LSIDGGGIKG…TVADPALLSV (199 aa)). Positions 24 to 29 (GGGIKG) match the GXGXXG motif. Positions 63-67 (GTSTG) match the GXSXG motif. The active-site Nucleophile is serine 65. Asparagine 103 is a glycosylation site (N-linked (GlcNAc...) asparagine). Aspartate 204 (proton acceptor) is an active-site residue. The DGA/G motif lies at 204–206 (DGA). Positions 349–373 (ETYEEALKRFAKLLSDRKKLRANKA) form a coiled coil.

Belongs to the patatin family. As to expression, tuber.

It localises to the vacuole. Probable lipolytic acyl hydrolase (LAH), an activity which is thought to be involved in the response of tubers to pathogens. This Solanum tuberosum (Potato) protein is Patatin-1-Kuras 2 (pat1-k2).